The chain runs to 1138 residues: Nuclear pore complex-interacting protein family member B4 (1138 aa).

Residues 63–87 traverse the membrane as a helical segment; it reads VIIAFPTSYKVVITLWIVYLWVSLL. Disordered regions lie at residues 241–263, 291–620, and 873–1138; these read NRMG…SLSL, TPLP…NIKT, and ERLR…RRLS. Residues 252–262 show a composition bias toward polar residues; it reads QQHSITDNSLS. Positions 349–359 are enriched in pro residues; sequence PLPPSALPSAP. Composition is skewed to basic and acidic residues over residues 406–416, 448–458, 490–500, 532–542, 574–584, 908–918, 950–960, and 992–1002; these read DNIKTPAERLR.

This sequence belongs to the NPIP family.

Its subcellular location is the membrane. This chain is Nuclear pore complex-interacting protein family member B4 (NPIPB4), found in Homo sapiens (Human).